Here is a 779-residue protein sequence, read N- to C-terminus: Endonuclease MutS2 (779 aa).

Position 328-335 (328-335 (GPNTGGKT)) interacts with ATP. The 76-residue stretch at 704–779 (LDLRGKRYEE…GSGATIVTLG (76 aa)) folds into the Smr domain.

This sequence belongs to the DNA mismatch repair MutS family. MutS2 subfamily. Homodimer. Binds to stalled ribosomes, contacting rRNA.

Its function is as follows. Endonuclease that is involved in the suppression of homologous recombination and thus may have a key role in the control of bacterial genetic diversity. Acts as a ribosome collision sensor, splitting the ribosome into its 2 subunits. Detects stalled/collided 70S ribosomes which it binds and splits by an ATP-hydrolysis driven conformational change. Acts upstream of the ribosome quality control system (RQC), a ribosome-associated complex that mediates the extraction of incompletely synthesized nascent chains from stalled ribosomes and their subsequent degradation. Probably generates substrates for RQC. The sequence is that of Endonuclease MutS2 from Streptococcus agalactiae serotype Ia (strain ATCC 27591 / A909 / CDC SS700).